Reading from the N-terminus, the 192-residue chain is MIGRLTGILAEKNPPQIVLDVNGVGYELDVPMSTFYNLPAAGEKTKLLTHFAVREDGHYLYGFLTEAERFAFRQLLKVSGIGARTALSVLSGLSVGDLAAAVAQQELGRLIKIPGIGKKTAERLLLELKGKLADATGVSLHPAVDDSKQDISNALLALGYNEKEAASAMKQLPADVSTSDGIRAALKLLSKV.

Positions 1 to 64 are domain I; that stretch reads MIGRLTGILA…EDGHYLYGFL (64 aa). The segment at 65-143 is domain II; it reads TEAERFAFRQ…DATGVSLHPA (79 aa). The interval 144 to 149 is flexible linker; the sequence is VDDSKQ. The domain III stretch occupies residues 149–192; that stretch reads QDISNALLALGYNEKEAASAMKQLPADVSTSDGIRAALKLLSKV.

The protein belongs to the RuvA family. Homotetramer. Forms an RuvA(8)-RuvB(12)-Holliday junction (HJ) complex. HJ DNA is sandwiched between 2 RuvA tetramers; dsDNA enters through RuvA and exits via RuvB. An RuvB hexamer assembles on each DNA strand where it exits the tetramer. Each RuvB hexamer is contacted by two RuvA subunits (via domain III) on 2 adjacent RuvB subunits; this complex drives branch migration. In the full resolvosome a probable DNA-RuvA(4)-RuvB(12)-RuvC(2) complex forms which resolves the HJ.

The protein resides in the cytoplasm. In terms of biological role, the RuvA-RuvB-RuvC complex processes Holliday junction (HJ) DNA during genetic recombination and DNA repair, while the RuvA-RuvB complex plays an important role in the rescue of blocked DNA replication forks via replication fork reversal (RFR). RuvA specifically binds to HJ cruciform DNA, conferring on it an open structure. The RuvB hexamer acts as an ATP-dependent pump, pulling dsDNA into and through the RuvAB complex. HJ branch migration allows RuvC to scan DNA until it finds its consensus sequence, where it cleaves and resolves the cruciform DNA. This Dechloromonas aromatica (strain RCB) protein is Holliday junction branch migration complex subunit RuvA.